A 455-amino-acid polypeptide reads, in one-letter code: Ribulose bisphosphate carboxylase large chain (455 aa).

K5 is subject to N6,N6,N6-trimethyllysine. Residues N114 and T164 each coordinate substrate. K166 (proton acceptor) is an active-site residue. K168 is a binding site for substrate. K192, D194, and E195 together coordinate Mg(2+). Residue K192 is modified to N6-carboxylysine. H285 functions as the Proton acceptor in the catalytic mechanism. 3 residues coordinate substrate: R286, H318, and S370.

It belongs to the RuBisCO large chain family. Type I subfamily. Heterohexadecamer of 8 large chains and 8 small chains; disulfide-linked. The disulfide link is formed within the large subunit homodimers. It depends on Mg(2+) as a cofactor. In terms of processing, the disulfide bond which can form in the large chain dimeric partners within the hexadecamer appears to be associated with oxidative stress and protein turnover.

The protein resides in the plastid. The protein localises to the chloroplast. It carries out the reaction 2 (2R)-3-phosphoglycerate + 2 H(+) = D-ribulose 1,5-bisphosphate + CO2 + H2O. It catalyses the reaction D-ribulose 1,5-bisphosphate + O2 = 2-phosphoglycolate + (2R)-3-phosphoglycerate + 2 H(+). Functionally, ruBisCO catalyzes two reactions: the carboxylation of D-ribulose 1,5-bisphosphate, the primary event in carbon dioxide fixation, as well as the oxidative fragmentation of the pentose substrate in the photorespiration process. Both reactions occur simultaneously and in competition at the same active site. The polypeptide is Ribulose bisphosphate carboxylase large chain (Lupinus microcarpus (Chick lupine)).